A 197-amino-acid polypeptide reads, in one-letter code: Adenylate kinase (197 aa).

Residue 16–21 coordinates ATP; the sequence is GAGKGT. The interval 36-65 is NMP; sequence STGDILRDHVARGTALGQQAGPLMEAGQLV. AMP-binding positions include T37, R42, 63 to 65, 90 to 93, and Q97; these read QLV and GFPR. The segment at 131–147 is LID; that stretch reads DRGRQAVAEGRAPRADD. R132 is a binding site for ATP. Residues 137 to 158 form a disordered region; that stretch reads VAEGRAPRADDNEETARKRQQV. Residues 141–153 are compositionally biased toward basic and acidic residues; it reads RAPRADDNEETAR. AMP contacts are provided by R144 and R155. G183 contributes to the ATP binding site.

It belongs to the adenylate kinase family. In terms of assembly, monomer.

Its subcellular location is the cytoplasm. It carries out the reaction AMP + ATP = 2 ADP. The protein operates within purine metabolism; AMP biosynthesis via salvage pathway; AMP from ADP: step 1/1. Functionally, catalyzes the reversible transfer of the terminal phosphate group between ATP and AMP. Plays an important role in cellular energy homeostasis and in adenine nucleotide metabolism. The polypeptide is Adenylate kinase (Deinococcus radiodurans (strain ATCC 13939 / DSM 20539 / JCM 16871 / CCUG 27074 / LMG 4051 / NBRC 15346 / NCIMB 9279 / VKM B-1422 / R1)).